The sequence spans 504 residues: Maturase K (504 aa).

This sequence belongs to the intron maturase 2 family. MatK subfamily.

It localises to the plastid. The protein localises to the chloroplast. Functionally, usually encoded in the trnK tRNA gene intron. Probably assists in splicing its own and other chloroplast group II introns. The polypeptide is Maturase K (Quercus coccifera (Kermes oak)).